The chain runs to 331 residues: MIDTSIPLVDLHRHLDGNVRVETIWDLGHQHNIALPADTLEGLAPFVQIQGKESSLVAFLKKLDWMVAVLADLDAVKRVAYENVADAAISGLDYAELRFSPYYMAMNHKLPIEGVVEAVIDGVKAGLKDYEVKINLIGIMSRSFGQDACMQELEALLAHKQHLVAMDLAGDELGFPGALFNDHFKKVRDAGLAITAHAGEAAGAESMWQAIQELGATRIGHGVNAIHDPKLMEYLAANRIGIESCPTSNLHTSTVTSYQEHPLRTFMEAGVLIGLNTDDPGVSAIDIKHEYRTVKQEMGFSDAELAQLQRNGVEMAFISDSERKALYAAKA.

Residues histidine 12 and histidine 14 each contribute to the Zn(2+) site. Positions 14, 16, and 170 each coordinate substrate. Zn(2+) is bound at residue histidine 197. Glutamate 200 acts as the Proton donor in catalysis. Residue aspartate 278 participates in Zn(2+) binding. Aspartate 279 is a substrate binding site.

The protein belongs to the metallo-dependent hydrolases superfamily. Adenosine and AMP deaminases family. Adenosine deaminase subfamily. The cofactor is Zn(2+).

It catalyses the reaction adenosine + H2O + H(+) = inosine + NH4(+). The enzyme catalyses 2'-deoxyadenosine + H2O + H(+) = 2'-deoxyinosine + NH4(+). Catalyzes the hydrolytic deamination of adenosine and 2-deoxyadenosine. This is Adenosine deaminase from Shewanella loihica (strain ATCC BAA-1088 / PV-4).